Reading from the N-terminus, the 218-residue chain is Eukaryotic translation initiation factor 3 subunit K (218 aa).

Ala2 bears the N-acetylalanine mark. A Phosphothreonine modification is found at Thr28. One can recognise a PCI domain in the interval 42 to 204 (YDLEANLAVL…SIKPKNIVEK (163 aa)). Ser217 carries the phosphoserine modification.

It belongs to the eIF-3 subunit K family. As to quaternary structure, component of the eukaryotic translation initiation factor 3 (eIF-3) complex, which is composed of 13 subunits: EIF3A, EIF3B, EIF3C, EIF3D, EIF3E, EIF3F, EIF3G, EIF3H, EIF3I, EIF3J, EIF3K, EIF3L and EIF3M. The eIF-3 complex appears to include 3 stable modules: module A is composed of EIF3A, EIF3B, EIF3G and EIF3I; module B is composed of EIF3F, EIF3H, and EIF3M; and module C is composed of EIF3C, EIF3D, EIF3E, EIF3K and EIF3L. EIF3C of module C binds EIF3B of module A and EIF3H of module B, thereby linking the three modules. EIF3J is a labile subunit that binds to the eIF-3 complex via EIF3B. The eIF-3 complex interacts with RPS6KB1 under conditions of nutrient depletion. Mitogenic stimulation leads to binding and activation of a complex composed of MTOR and RPTOR, leading to phosphorylation and release of RPS6KB1 and binding of EIF4B to eIF-3. Interacts with CCND3, but not with CCND1 and CCND2.

It is found in the nucleus. It localises to the cytoplasm. In terms of biological role, component of the eukaryotic translation initiation factor 3 (eIF-3) complex, which is required for several steps in the initiation of protein synthesis. The eIF-3 complex associates with the 40S ribosome and facilitates the recruitment of eIF-1, eIF-1A, eIF-2:GTP:methionyl-tRNAi and eIF-5 to form the 43S pre-initiation complex (43S PIC). The eIF-3 complex stimulates mRNA recruitment to the 43S PIC and scanning of the mRNA for AUG recognition. The eIF-3 complex is also required for disassembly and recycling of post-termination ribosomal complexes and subsequently prevents premature joining of the 40S and 60S ribosomal subunits prior to initiation. The eIF-3 complex specifically targets and initiates translation of a subset of mRNAs involved in cell proliferation, including cell cycling, differentiation and apoptosis, and uses different modes of RNA stem-loop binding to exert either translational activation or repression. This Bos taurus (Bovine) protein is Eukaryotic translation initiation factor 3 subunit K.